Reading from the N-terminus, the 471-residue chain is Phosphatidylinositol 4-kinase type 2-alpha (471 aa).

Disordered stretches follow at residues 1-25 and 48-101; these read MDET…QCSP and PGSA…PDDP. Over residues 90–101 the composition is skewed to basic and acidic residues; it reads AERERNKFPDDP. Positions 117-445 constitute a PI3K/PI4K catalytic domain; the sequence is DILPERISQG…VQTPPVIVET (329 aa). Positions 123 to 129 are G-loop; sequence ISQGSSG. ATP is bound by residues 124–130 and Lys145; that span reads SQGSSGS. An important for substrate binding region spans residues 150–152; sequence EPY. The interval 158 to 171 is important for interaction with membranes; the sequence is KWTKWLQKLCCPCC. 4 S-palmitoyl cysteine lipidation sites follow: Cys167, Cys168, Cys170, and Cys171. 254 to 257 lines the ATP pocket; that stretch reads QLFV. Residues 261–269 form an important for interaction with membranes region; that stretch reads KDADYWLRR. Residues 298–306 form a catalytic loop region; the sequence is RNTDRGNDN. The activation loop stretch occupies residues 336–356; the sequence is AIDNGLAFPLKHPDSWRAYPF. Asp338 contacts ATP. Positions 351–360 are important for interaction with membranes; sequence WRAYPFYWAW.

This sequence belongs to the PI3/PI4-kinase family. Type II PI4K subfamily.

The protein localises to the golgi apparatus. Its subcellular location is the trans-Golgi network membrane. It localises to the membrane raft. The protein resides in the endosome. It is found in the endosome membrane. The protein localises to the cytoplasmic vesicle. Its subcellular location is the cell projection. It localises to the dendrite. The protein resides in the presynaptic cell membrane. It is found in the synapse. The protein localises to the synaptosome. Its subcellular location is the mitochondrion. It localises to the membrane. The protein resides in the cell membrane. It is found in the perikaryon. The protein localises to the neuron projection. The enzyme catalyses a 1,2-diacyl-sn-glycero-3-phospho-(1D-myo-inositol) + ATP = a 1,2-diacyl-sn-glycero-3-phospho-(1D-myo-inositol 4-phosphate) + ADP + H(+). Its function is as follows. Membrane-bound phosphatidylinositol-4 kinase (PI4-kinase) that catalyzes the phosphorylation of phosphatidylinositol (PI) to phosphatidylinositol 4-phosphate (PI4P), a lipid that plays important roles in endocytosis, Golgi function, protein sorting and membrane trafficking. Besides, phosphorylation of phosphatidylinositol (PI) to phosphatidylinositol 4-phosphate (PI4P) is the first committed step in the generation of phosphatidylinositol 4,5-bisphosphate (PIP2), a precursor of the second messenger inositol 1,4,5-trisphosphate (InsP3). This is Phosphatidylinositol 4-kinase type 2-alpha (pi4k2a) from Xenopus tropicalis (Western clawed frog).